Consider the following 155-residue polypeptide: Fibroblast growth factor 1 (155 aa).

Ala-2 carries the N-acetylalanine modification. Positions 2-15 are excised as a propeptide; sequence AEGETTTFRALTEK. Asn-33 lines the heparin pocket. The interval 127–143 is heparin-binding; it reads KKNGSSKLGPRTHFGQK.

It belongs to the heparin-binding growth factors family. As to quaternary structure, monomer. Homodimer. Interacts with FGFR1, FGFR2, FGFR3 and FGFR4. Affinity between fibroblast growth factors (FGFs) and their receptors is increased by heparan sulfate glycosaminoglycans that function as coreceptors. Found in a complex with FGFBP1, FGF1 and FGF2. Interacts with FGFBP1. Part of a Cu(2+)-dependent multiprotein aggregate containing FGF1, S100A13 and SYT1. Interacts with SYT1. Interacts with S100A13. Interacts with LRRC59. Interacts with CSNKA, CSNKB and FIBP. While binding with LRRC59, CSNKA and FIBP seem mutually exclusive, CSNKB and FIBP may cooperatively interact with FGF1. Forms a ternary complex with FGFR1 and ITGAV:ITGB3 and induces the recruitment of PTPN11 to the complex. Post-translationally, in the nucleus, phosphorylated by PKC/PRKCD.

Its subcellular location is the secreted. The protein resides in the cytoplasm. The protein localises to the cell cortex. It localises to the cytosol. It is found in the nucleus. Functionally, plays an important role in the regulation of cell survival, cell division, angiogenesis, cell differentiation and cell migration. Functions as a potent mitogen in vitro. Acts as a ligand for FGFR1 and integrins. Binds to FGFR1 in the presence of heparin leading to FGFR1 dimerization and activation via sequential autophosphorylation on tyrosine residues which act as docking sites for interacting proteins, leading to the activation of several signaling cascades. Binds to integrin ITGAV:ITGB3. Its binding to integrin, subsequent ternary complex formation with integrin and FGFR1, and the recruitment of PTPN11 to the complex are essential for FGF1 signaling. Induces the phosphorylation and activation of FGFR1, FRS2, MAPK3/ERK1, MAPK1/ERK2 and AKT1. Can induce angiogenesis. The sequence is that of Fibroblast growth factor 1 (FGF1) from Ovis aries (Sheep).